The following is a 420-amino-acid chain: L-rhamnose isomerase (420 aa).

3 residues coordinate Mn(2+): histidine 264, aspartate 296, and aspartate 298.

The protein belongs to the rhamnose isomerase family. Requires Mn(2+) as cofactor.

It is found in the cytoplasm. The enzyme catalyses L-rhamnopyranose = L-rhamnulose. It participates in carbohydrate degradation; L-rhamnose degradation; glycerone phosphate from L-rhamnose: step 1/3. Its function is as follows. Catalyzes the interconversion of L-rhamnose and L-rhamnulose. The sequence is that of L-rhamnose isomerase from Listeria monocytogenes serovar 1/2a (strain ATCC BAA-679 / EGD-e).